Consider the following 172-residue polypeptide: Podoplanin (172 aa).

The N-terminal stretch at 1–22 (MWTVPVLFWVLGSVWFWDSAQG) is a signal peptide. The Extracellular portion of the chain corresponds to 23–141 (GTIGVNEDDI…KKDGLPVVTL (119 aa)). O-linked (GalNAc...) threonine glycans are attached at residues T37, T51, T52, T53, and T56. Residues 49–132 (KITTTGATGG…AGDETQTTDK (84 aa)) are disordered. A compositionally biased stretch (polar residues) spans 51-63 (TTTGATGGLNEST). The N-linked (GlcNAc...) asparagine glycan is linked to N60. T63, T71, and T77 each carry an O-linked (GalNAc...) threonine glycan. A compositionally biased stretch (basic and acidic residues) spans 72–81 (QRERGTKPPL). Residue S85 is glycosylated (O-linked (GalNAc...) serine). T86 is a glycosylation site (O-linked (GalNAc...) threonine). O-linked (GalNAc...) serine glycosylation is present at S87. A glycan (O-linked (GalNAc...) threonine) is linked at T89. A glycan (O-linked (GalNAc...) serine) is linked at S90. The segment covering 90–99 (SDHDHREHES) has biased composition (basic and acidic residues). O-linked (GalNAc...) threonine glycans are attached at residues T100, T101, T102, T107, and T115. Residues 100–109 (TTTVKVVTSH) show a composition bias toward low complexity. The span at 110–132 (SVDKKTSHPNRDNAGDETQTTDK) shows a compositional bias: basic and acidic residues. A helical membrane pass occupies residues 142–162 (VGIIVGVLLAIGFVGGIFIVV). A requires for dimerization and lipidd rafts association region spans residues 143–147 (GIIVG). Residues 163–172 (MKKISGRFSP) lie on the Cytoplasmic side of the membrane. Residues 164 to 165 (KK) are requires for interaction with MSN and EZR.

This sequence belongs to the podoplanin family. Homodimer. Interacts with CLEC1B; the interaction is independent of CLEC1B glycosylation and activates CLEC1B; the interaction is dependent of sialic acid on O-glycans. Interacts with CD9; this interaction is homophilic and attenuates platelet aggregation and pulmonary metastasis induced by PDPN. Interacts with LGALS8; the interaction is glycosylation-dependent; may participate in connection of the lymphatic endothelium to the surrounding extracellular matrix. Interacts with HSPA9. Interacts (via extracellular domain) with CD44; this interaction is required for PDPN-mediated directional migration and regulation of lamellipodia extension/stabilization during cell spreading and migration. Interacts (via cytoplasmic domain) with MSN and EZR; activates RHOA and promotes epithelial-mesenchymal transition. Interacts with CCL21; relocalized PDPN to the basolateral membrane. Post-translationally, extensively O-glycosylated. Contains sialic acid residues. O-glycosylation is necessary for platelet aggregation activity. Disialylated at Thr-52; sialic acid is critical for platelet-aggregating activity and for CLEC1B interaction. Phosphorylated by PKA; decreases cell migration. In terms of processing, the N-terminus is blocked. As to expression, detected at high levels in lung and brain, at lower levels in kidney, stomach, liver, spleen and esophagus, and not detected in skin and small intestine. Expressed in epithelial cells of choroid plexus, ependyma, glomerulus and alveolus, in mesothelial cells and in endothelia of lymphatic vessels. Also expressed in stromal cells of peripheral lymphoid tissue and thymic epithelial cells. Detected in carcinoma cell lines and cultured fibroblasts. Expressed at higher levels in colon carcinomas than in normal colon tissue.

Its subcellular location is the membrane. The protein localises to the cell projection. It localises to the lamellipodium membrane. The protein resides in the filopodium membrane. It is found in the microvillus membrane. Its subcellular location is the ruffle membrane. The protein localises to the membrane raft. It localises to the apical cell membrane. The protein resides in the basolateral cell membrane. It is found in the invadopodium. Functionally, mediates effects on cell migration and adhesion through its different partners. During development plays a role in blood and lymphatic vessels separation by binding CLEC1B, triggering CLEC1B activation in platelets and leading to platelet activation and/or aggregation. Interaction with CD9, on the contrary, attenuates platelet aggregation and pulmonary metastasis induced by PDPN. Mediates effects on cell migration and adhesion through its different partners. Through MSN or EZR interaction promotes epithelial-mesenchymal transition (EMT) leading to ERZ phosphorylation and triggering RHOA activation leading to cell migration increase and invasiveness. Interaction with CD44 promotes directional cell migration in epithelial and tumor cells. In lymph nodes (LNs), controls fibroblastic reticular cells (FRCs) adhesion to the extracellular matrix (ECM) and contraction of the actomyosin by maintaining ERM proteins (EZR; MSN and RDX) and MYL9 activation through association with unknown transmembrane proteins. Engagement of CLEC1B by PDPN promotes FRCs relaxation by blocking lateral membrane interactions leading to reduction of ERM proteins (EZR; MSN and RDX) and MYL9 activation. Through binding with LGALS8 may participate in connection of the lymphatic endothelium to the surrounding extracellular matrix. In keratinocytes, induces changes in cell morphology showing an elongated shape, numerous membrane protrusions, major reorganization of the actin cytoskeleton, increased motility and decreased cell adhesion. Controls invadopodia stability and maturation leading to efficient degradation of the extracellular matrix (ECM) in tumor cells through modulation of RHOC activity in order to activate ROCK1/ROCK2 and LIMK1/LIMK2 and inactivation of CFL1. Required for normal lung cell proliferation and alveolus formation at birth. Does not function as a water channel or as a regulator of aquaporin-type water channels. Does not have any effect on folic acid or amino acid transport. This is Podoplanin from Mus musculus (Mouse).